The sequence spans 459 residues: Biphenyl dioxygenase subunit alpha (459 aa).

The region spanning 58-156 (WLLLGHESHV…KEGDCGFDKA (99 aa)) is the Rieske domain. Positions 100, 102, 120, and 123 each coordinate [2Fe-2S] cluster. The Fe cation site is built by histidine 233 and histidine 239.

It belongs to the bacterial ring-hydroxylating dioxygenase alpha subunit family. As to quaternary structure, heterohexamer consisting of three BphA subunits and three BphE subunits. A ferredoxin (BphF) and a ferredoxin reductase (BphG) must be present to obtain activity. [2Fe-2S] cluster is required as a cofactor. The cofactor is Fe cation.

It carries out the reaction biphenyl + NADH + O2 + H(+) = (2R,3S)-3-phenylcyclohexa-3,5-diene-1,2-diol + NAD(+). It participates in xenobiotic degradation; biphenyl degradation; 2-hydroxy-2,4-pentadienoate and benzoate from biphenyl: step 1/4. The protein is Biphenyl dioxygenase subunit alpha (bphA) of Paraburkholderia xenovorans (strain LB400).